The following is a 353-amino-acid chain: Chorismate synthase (353 aa).

The NADP(+) site is built by R48 and R54. Residues 125–127 (RSS), 238–239 (NA), G278, 293–297 (KPTSS), and R319 contribute to the FMN site.

This sequence belongs to the chorismate synthase family. As to quaternary structure, homotetramer. It depends on FMNH2 as a cofactor.

The enzyme catalyses 5-O-(1-carboxyvinyl)-3-phosphoshikimate = chorismate + phosphate. It participates in metabolic intermediate biosynthesis; chorismate biosynthesis; chorismate from D-erythrose 4-phosphate and phosphoenolpyruvate: step 7/7. In terms of biological role, catalyzes the anti-1,4-elimination of the C-3 phosphate and the C-6 proR hydrogen from 5-enolpyruvylshikimate-3-phosphate (EPSP) to yield chorismate, which is the branch point compound that serves as the starting substrate for the three terminal pathways of aromatic amino acid biosynthesis. This reaction introduces a second double bond into the aromatic ring system. In Bordetella bronchiseptica (strain ATCC BAA-588 / NCTC 13252 / RB50) (Alcaligenes bronchisepticus), this protein is Chorismate synthase.